Consider the following 153-residue polypeptide: Large ribosomal subunit protein bL9 (153 aa).

It belongs to the bacterial ribosomal protein bL9 family.

Binds to the 23S rRNA. In Blochmanniella pennsylvanica (strain BPEN), this protein is Large ribosomal subunit protein bL9.